The chain runs to 479 residues: Ribosomal RNA small subunit methyltransferase F (479 aa).

Residues 125 to 131 (AAAPGSK), glutamate 149, aspartate 176, and aspartate 194 contribute to the S-adenosyl-L-methionine site. Cysteine 247 (nucleophile) is an active-site residue.

The protein belongs to the class I-like SAM-binding methyltransferase superfamily. RsmB/NOP family.

Its subcellular location is the cytoplasm. It carries out the reaction cytidine(1407) in 16S rRNA + S-adenosyl-L-methionine = 5-methylcytidine(1407) in 16S rRNA + S-adenosyl-L-homocysteine + H(+). Its function is as follows. Specifically methylates the cytosine at position 1407 (m5C1407) of 16S rRNA. The chain is Ribosomal RNA small subunit methyltransferase F from Shigella sonnei (strain Ss046).